A 368-amino-acid chain; its full sequence is MSAPAQPRERSFPSIEFTDAEADAREFPSSRSRKYNYYQPSKKRATIYEDVTVDVQPDPERHLTQGWIYGFGDGPGGYPKEWTSAQSSNWHQFLDPNEEWEQSIYRNNSAVVHQVDLCLQNAKRARAYDGWNSAWLKFIERNLGAWMHAESGMGLHVFTSIQRSAPTNMINNAVCVNAAHKLRFAQDLALFNLDLSEAEEAFDGSAHKEVWQSAPEWQPTREAVERLTAIGDWAELLFCSNIVFEQLVGSLFRSELVMQVAARNGDYITPTIVGTGEYDYDRDLNYSRALFQMLARDEKHGIDNRKLFSRWMSEWFPGASTRARGLQPIWSQPADKSVTFSSSLEHAKTKFADVLAAIDVDIPEELNK.

The interval 1–33 (MSAPAQPRERSFPSIEFTDAEADAREFPSSRSR) is disordered.

It belongs to the TmoE/XamoE family. In terms of assembly, the propane 2-monooxygenase multicomponent enzyme system is composed of an electron transfer component and a monooxygenase component interacting with the effector protein PrmD. The electron transfer component is composed of a reductase (PrmB), and the monooxygenase component is formed by a large subunit (PrmA) and a small subunit (PrmC). Probably requires the presence of the chaperonin-like protein PrmG to ensure a productive folding, resulting of a soluble PrmC, which leads to the active form of PrmABCD.

It catalyses the reaction propane + NADH + O2 + H(+) = propan-2-ol + NAD(+) + H2O. The enzyme catalyses phenol + NADH + O2 + H(+) = hydroquinone + NAD(+) + H2O. Component of the propane 2-monooxygenase multicomponent enzyme system which is involved in the degradation of propane via the O2-dependent hydroxylation of propane. Under acetone induction, also able to catalyze the oxidation of phenol to yield hydroquinone. In Gordonia sp. (strain TY-5), this protein is Propane 2-monooxygenase, hydroxylase component small subunit.